We begin with the raw amino-acid sequence, 313 residues long: Urease accessory protein UreD (313 aa).

The segment at 1–30 (MTDLSFPGQAASPGEGAGQTPSGGSGHRFD) is disordered. Residues 15-26 (EGAGQTPSGGSG) show a composition bias toward gly residues.

Belongs to the UreD family. As to quaternary structure, ureD, UreF and UreG form a complex that acts as a GTP-hydrolysis-dependent molecular chaperone, activating the urease apoprotein by helping to assemble the nickel containing metallocenter of UreC. The UreE protein probably delivers the nickel.

The protein localises to the cytoplasm. Functionally, required for maturation of urease via the functional incorporation of the urease nickel metallocenter. The chain is Urease accessory protein UreD from Chromohalobacter salexigens (strain ATCC BAA-138 / DSM 3043 / CIP 106854 / NCIMB 13768 / 1H11).